The primary structure comprises 483 residues: MFS-type transporter ppzB (483 aa).

5 helical membrane passes run 18–38, 62–82, 96–116, 149–169, and 178–198; these read FILT…GILL, AFLA…GWAA, MFLV…LLVV, IGTI…LGGV, and AVFA…ALVI. N-linked (GlcNAc...) asparagine glycosylation is present at asparagine 219. A run of 6 helical transmembrane segments spans residues 281–301, 310–330, 344–364, 374–394, 424–444, and 453–473; these read LAML…ATVP, FSSL…FALG, AAAT…GLPE, VALF…VTSP, FGFS…LGGF, and VMGA…FLFV.

Belongs to the major facilitator superfamily. TCR/Tet family.

It is found in the membrane. Functionally, MFS-type transporter; part of the gene cluster that mediates the biosynthesis of pyrrolopyrazines, secondary metabolites showing insecticidal activity. Probably involved in the secretion of peramine and other pyrrolopyrazines. The polypeptide is MFS-type transporter ppzB (Metarhizium rileyi (strain RCEF 4871) (Nomuraea rileyi)).